The chain runs to 1171 residues: Putative tricorn protease homolog 2 (1171 aa).

The tract at residues 432-498 (AGYPPDAGDE…GSPGTPATAG (67 aa)) is disordered. Composition is skewed to low complexity over residues 444–456 (AGTA…APDA) and 466–498 (IAAG…ATAG). The Charge relay system role is filled by His827. The tract at residues 842 to 941 (YQRWQGLLGA…RVAVVPLVDE (100 aa)) is PDZ-like. Substrate is bound at residue 1002–1004 (AGG). Catalysis depends on Ser1051, which acts as the Nucleophile. Residue 1079-1081 (GMT) coordinates substrate. Catalysis depends on Glu1109, which acts as the Charge relay system. The interval 1149–1171 (PPATPPGYEAVPDRSRPPLPPRE) is disordered. Residues 1159–1171 (VPDRSRPPLPPRE) show a composition bias toward basic and acidic residues.

It belongs to the peptidase S41B family.

The protein localises to the cytoplasm. In terms of biological role, degrades oligopeptides in a sequential manner. This is Putative tricorn protease homolog 2 (tri2) from Streptomyces coelicolor (strain ATCC BAA-471 / A3(2) / M145).